Reading from the N-terminus, the 342-residue chain is Glycerol-3-phosphate dehydrogenase [NAD(P)+] (342 aa).

3 residues coordinate NADPH: W11, R31, and K102. Residues K102 and G132 each contribute to the sn-glycerol 3-phosphate site. Residue A136 coordinates NADPH. 5 residues coordinate sn-glycerol 3-phosphate: K187, D240, S250, R251, and N252. The active-site Proton acceptor is the K187. R251 contacts NADPH. E277 provides a ligand contact to NADPH.

This sequence belongs to the NAD-dependent glycerol-3-phosphate dehydrogenase family.

Its subcellular location is the cytoplasm. The enzyme catalyses sn-glycerol 3-phosphate + NAD(+) = dihydroxyacetone phosphate + NADH + H(+). It catalyses the reaction sn-glycerol 3-phosphate + NADP(+) = dihydroxyacetone phosphate + NADPH + H(+). The protein operates within membrane lipid metabolism; glycerophospholipid metabolism. Its function is as follows. Catalyzes the reduction of the glycolytic intermediate dihydroxyacetone phosphate (DHAP) to sn-glycerol 3-phosphate (G3P), the key precursor for phospholipid synthesis. The polypeptide is Glycerol-3-phosphate dehydrogenase [NAD(P)+] (Symbiobacterium thermophilum (strain DSM 24528 / JCM 14929 / IAM 14863 / T)).